A 509-amino-acid polypeptide reads, in one-letter code: Protein MAIN-LIKE 1 (509 aa).

The disordered stretch occupies residues 477–509; it reads GYGKRRRRNEHTPTPNNGGGNDISSLLLQKEDS. A compositionally biased stretch (polar residues) spans 488 to 503; the sequence is TPTPNNGGGNDISSLL.

In terms of tissue distribution, expressed in root tips, the shoot apical meristem (SAM), leaves, mature flowers and embryos.

The protein resides in the nucleus. Functionally, acts as an important factor for cell fate determination and maintenance throughout plant development. Required for the organization of the root apical meristem (RAM) and the shoot apical meristem (SAM). Required to maintain genome stability and cell division activity in meristematic cells. In Arabidopsis thaliana (Mouse-ear cress), this protein is Protein MAIN-LIKE 1.